Reading from the N-terminus, the 427-residue chain is Enolase (427 aa).

A (2R)-2-phosphoglycerate-binding site is contributed by Gln-163. Glu-205 (proton donor) is an active-site residue. Positions 242, 285, and 312 each coordinate Mg(2+). Positions 337, 366, 367, and 388 each coordinate (2R)-2-phosphoglycerate. Residue Lys-337 is the Proton acceptor of the active site.

This sequence belongs to the enolase family. It depends on Mg(2+) as a cofactor.

Its subcellular location is the cytoplasm. The protein resides in the secreted. It localises to the cell surface. It carries out the reaction (2R)-2-phosphoglycerate = phosphoenolpyruvate + H2O. Its pathway is carbohydrate degradation; glycolysis; pyruvate from D-glyceraldehyde 3-phosphate: step 4/5. Its function is as follows. Catalyzes the reversible conversion of 2-phosphoglycerate (2-PG) into phosphoenolpyruvate (PEP). It is essential for the degradation of carbohydrates via glycolysis. In Thiobacillus denitrificans (strain ATCC 25259 / T1), this protein is Enolase.